The sequence spans 267 residues: N-acetylgalactosamine permease IIC component 1 (267 aa).

Residues 1–10 (MHEITLLQGL) lie on the Periplasmic side of the membrane. The region spanning 1–237 (MHEITLLQGL…VAVLGAGFAV (237 aa)) is the PTS EIIC type-4 domain. Residues 11–31 (SLAALVFVLGIDFWLEALFLF) form a helical membrane-spanning segment. Residues 32–33 (RP) are Cytoplasmic-facing. A helical membrane pass occupies residues 34 to 54 (IIVCTLTGAILGDIQTGLITG). Over 55-66 (GLTELAFAGLTP) the chain is Periplasmic. The chain crosses the membrane as a helical span at residues 67–87 (AGGVQPPNPIMAGLMTTVIAW). At 88–94 (STGVDAK) the chain is on the cytoplasmic side. A helical membrane pass occupies residues 95–115 (TAIGLGLPFSLLMQYVILFFY). The Periplasmic segment spans residues 116–141 (SAFSLFMTKADKCAKEADTAAFSRLN). Residues 142–162 (WTTMLIVASAYAVIAFLCTYL) traverse the membrane as a helical segment. Topologically, residues 163-177 (AQGAMQALVKAMPAW) are cytoplasmic. Residues 178 to 198 (LTHGFEVAGGILPAVGFGLLL) form a helical membrane-spanning segment. Over 199 to 209 (RVMFKAQYIPY) the chain is Periplasmic. A helical transmembrane segment spans residues 210 to 230 (LIAGFLFVCYIQVSNLLPVAV). Over 231–267 (LGAGFAVYEFFNAKSRQQAQPQPVASKNEEEDYSNGI) the chain is Cytoplasmic.

The protein localises to the cell inner membrane. The phosphoenolpyruvate-dependent sugar phosphotransferase system (PTS), a major carbohydrate active -transport system, catalyzes the phosphorylation of incoming sugar substrates concomitant with their translocation across the cell membrane. This system is involved in N-acetylgalactosamine transport. The protein is N-acetylgalactosamine permease IIC component 1 (agaC) of Escherichia coli (strain K12).